The chain runs to 486 residues: Hexokinase-2 (486 aa).

Residue Ser-15 is modified to Phosphoserine. The Hexokinase domain occupies Lys-21–Ala-469. Thr-38 bears the Phosphothreonine mark. The hexokinase small subdomain stretch occupies residues Thr-75–Ile-209. ATP contacts are provided by residues Asp-86–Asn-91 and Lys-111. At Ser-158 the chain carries Phosphoserine. Substrate is bound by residues Ser-158, Thr-175–Lys-176, Asn-210–Asp-211, and Asn-237. Residues Asn-210–Asp-458 are hexokinase large subdomain. Ser-245 carries the post-translational modification Phosphoserine. A substrate-binding site is contributed by Glu-269. Phosphoserine is present on Ser-272. Glu-302 provides a ligand contact to substrate. Residues Gly-307–Tyr-308, Thr-344–Ala-348, and Ser-419–Arg-423 contribute to the ATP site.

Belongs to the hexokinase family. As to quaternary structure, homodimer.

It catalyses the reaction a D-hexose + ATP = a D-hexose 6-phosphate + ADP + H(+). The catalysed reaction is D-fructose + ATP = D-fructose 6-phosphate + ADP + H(+). The enzyme catalyses D-glucose + ATP = D-glucose 6-phosphate + ADP + H(+). It participates in carbohydrate metabolism; hexose metabolism. Its pathway is carbohydrate degradation; glycolysis; D-glyceraldehyde 3-phosphate and glycerone phosphate from D-glucose: step 1/4. Subject to allosteric control. Substrate inhibition by ATP. Functionally, catalyzes the phosphorylation of hexose, such as D-glucose and D-fructose, to hexose 6-phosphate (D-glucose 6-phosphate and D-fructose 6-phosphate, respectively). Mediates the initial step of glycolysis by catalyzing phosphorylation of D-glucose to D-glucose 6-phosphate. The chain is Hexokinase-2 (HXK2) from Saccharomyces cerevisiae (strain ATCC 204508 / S288c) (Baker's yeast).